A 527-amino-acid polypeptide reads, in one-letter code: Phosphoethanolamine transferase OpgE (527 aa).

Topologically, residues 1–33 (MNLTLKESLVTRSRVFSPWTAFYFLQSLLINLG) are periplasmic. The helical transmembrane segment at 34–54 (LGYPFSLLYTAAFTAILLLLW) threads the bilayer. Topologically, residues 55–62 (RTLPRVQK) are cytoplasmic. A helical membrane pass occupies residues 63–83 (VLVGVSSLVAACYFPFAQAYG). Topologically, residues 84-106 (APNFNTLLALHSTNMEESTEILT) are periplasmic. A helical membrane pass occupies residues 107–127 (IFPWYSYLVGLFIFALGVIAI). Residues 128 to 146 (RRKKENEKARWNTFDSLCL) are Cytoplasmic-facing. The chain crosses the membrane as a helical span at residues 147-167 (VFSVATFFVAPVQNLAWGGVF). The Periplasmic segment spans residues 168-527 (KLKDTGYPVF…LGTDIFDPKP (360 aa)).

It belongs to the phosphoethanolamine transferase family.

Its subcellular location is the cell inner membrane. Its pathway is glycan metabolism; osmoregulated periplasmic glucan (OPG) biosynthesis. Its function is as follows. Catalyzes the addition of a phosphoethanolamine moiety to the osmoregulated periplasmic glucan (OPG) backbone. The protein is Phosphoethanolamine transferase OpgE (opgE) of Escherichia coli (strain K12).